The chain runs to 227 residues: Cytochrome c oxidase subunit 2 (227 aa).

The Mitochondrial intermembrane segment spans residues 1–14; the sequence is MAYPMQLGFQDATS. A helical transmembrane segment spans residues 15-45; the sequence is PIMEELLHFHDHTLMIVFLISSLVLYIISLM. Residues 46–59 are Mitochondrial matrix-facing; the sequence is LTTKLTHTSTMDAQ. Residues 60–87 form a helical membrane-spanning segment; that stretch reads EVETIWTILPAIILILIALPSLRILYMM. The Mitochondrial intermembrane segment spans residues 88-227; the sequence is DEINNPSLTV…YFEKWSASML (140 aa). Positions 161, 196, 198, 200, 204, and 207 each coordinate Cu cation. Position 198 (Glu-198) interacts with Mg(2+). Residue Tyr-218 is modified to Phosphotyrosine.

It belongs to the cytochrome c oxidase subunit 2 family. As to quaternary structure, component of the cytochrome c oxidase (complex IV, CIV), a multisubunit enzyme composed of 14 subunits. The complex is composed of a catalytic core of 3 subunits MT-CO1, MT-CO2 and MT-CO3, encoded in the mitochondrial DNA, and 11 supernumerary subunits COX4I, COX5A, COX5B, COX6A, COX6B, COX6C, COX7A, COX7B, COX7C, COX8 and NDUFA4, which are encoded in the nuclear genome. The complex exists as a monomer or a dimer and forms supercomplexes (SCs) in the inner mitochondrial membrane with NADH-ubiquinone oxidoreductase (complex I, CI) and ubiquinol-cytochrome c oxidoreductase (cytochrome b-c1 complex, complex III, CIII), resulting in different assemblies (supercomplex SCI(1)III(2)IV(1) and megacomplex MCI(2)III(2)IV(2)). Found in a complex with TMEM177, COA6, COX18, COX20, SCO1 and SCO2. Interacts with TMEM177 in a COX20-dependent manner. Interacts with COX20. Interacts with COX16. The cofactor is Cu cation.

It localises to the mitochondrion inner membrane. The enzyme catalyses 4 Fe(II)-[cytochrome c] + O2 + 8 H(+)(in) = 4 Fe(III)-[cytochrome c] + 2 H2O + 4 H(+)(out). In terms of biological role, component of the cytochrome c oxidase, the last enzyme in the mitochondrial electron transport chain which drives oxidative phosphorylation. The respiratory chain contains 3 multisubunit complexes succinate dehydrogenase (complex II, CII), ubiquinol-cytochrome c oxidoreductase (cytochrome b-c1 complex, complex III, CIII) and cytochrome c oxidase (complex IV, CIV), that cooperate to transfer electrons derived from NADH and succinate to molecular oxygen, creating an electrochemical gradient over the inner membrane that drives transmembrane transport and the ATP synthase. Cytochrome c oxidase is the component of the respiratory chain that catalyzes the reduction of oxygen to water. Electrons originating from reduced cytochrome c in the intermembrane space (IMS) are transferred via the dinuclear copper A center (CU(A)) of subunit 2 and heme A of subunit 1 to the active site in subunit 1, a binuclear center (BNC) formed by heme A3 and copper B (CU(B)). The BNC reduces molecular oxygen to 2 water molecules using 4 electrons from cytochrome c in the IMS and 4 protons from the mitochondrial matrix. This Bison bonasus (European bison) protein is Cytochrome c oxidase subunit 2 (MT-CO2).